The primary structure comprises 310 residues: Metal ABC transporter substrate-binding lipoprotein ScbA (310 aa).

Positions 1 to 19 are cleaved as a signal peptide; sequence MKKCRFLVLLLLAFVGLAA. Cys20 carries N-palmitoyl cysteine lipidation. Cys20 is lipidated: S-diacylglycerol cysteine. Positions 68, 140, 206, and 281 each coordinate a divalent metal cation.

The protein belongs to the bacterial solute-binding protein 9 family.

The protein resides in the cell membrane. Part of an ATP-binding cassette (ABC) transport system involved in metal import. Binds a metal with high affinity and specificity and delivers it to the membrane permease for translocation into the cytoplasm. Part of an ATP-driven transport system for manganese. Does not exhibit adhesion properties. The sequence is that of Metal ABC transporter substrate-binding lipoprotein ScbA (scbA) from Streptococcus cristatus.